The chain runs to 488 residues: Malonate-semialdehyde dehydrogenase (488 aa).

Residues A150, F152, K176, E179, R180, S229, and T251 each contribute to the NAD(+) site. The active-site Nucleophile is the C284. NAD(+) is bound at residue E382.

The protein belongs to the aldehyde dehydrogenase family. IolA subfamily. In terms of assembly, homotetramer.

It catalyses the reaction 3-oxopropanoate + NAD(+) + CoA + H2O = hydrogencarbonate + acetyl-CoA + NADH + H(+). The enzyme catalyses 2-methyl-3-oxopropanoate + NAD(+) + CoA + H2O = propanoyl-CoA + hydrogencarbonate + NADH + H(+). It participates in polyol metabolism; myo-inositol degradation into acetyl-CoA; acetyl-CoA from myo-inositol: step 7/7. In terms of biological role, catalyzes the oxidation of malonate semialdehyde (MSA) and methylmalonate semialdehyde (MMSA) into acetyl-CoA and propanoyl-CoA, respectively. Is involved in a myo-inositol catabolic pathway. Bicarbonate, and not CO2, is the end-product of the enzymatic reaction. This chain is Malonate-semialdehyde dehydrogenase, found in Listeria monocytogenes serovar 1/2a (strain ATCC BAA-679 / EGD-e).